The primary structure comprises 379 residues: Cobalt-precorrin-5B C(1)-methyltransferase (379 aa).

The protein belongs to the CbiD family.

The catalysed reaction is Co-precorrin-5B + S-adenosyl-L-methionine = Co-precorrin-6A + S-adenosyl-L-homocysteine. It participates in cofactor biosynthesis; adenosylcobalamin biosynthesis; cob(II)yrinate a,c-diamide from sirohydrochlorin (anaerobic route): step 6/10. Catalyzes the methylation of C-1 in cobalt-precorrin-5B to form cobalt-precorrin-6A. This chain is Cobalt-precorrin-5B C(1)-methyltransferase, found in Edwardsiella ictaluri (strain 93-146).